The primary structure comprises 327 residues: Tartrate-resistant acid phosphatase type 5 (327 aa).

Positions 1 to 22 (MDSWVVLLGLQIIWLPLLTHGT) are cleaved as a signal peptide. Positions 35, 73, 76, and 112 each coordinate Fe cation. 2 N-linked (GlcNAc...) asparagine glycosylation sites follow: asparagine 118 and asparagine 149. A disulfide bridge links cysteine 163 with cysteine 221. Residues histidine 207, histidine 242, and histidine 244 each contribute to the Fe cation site.

As to quaternary structure, exists either as monomer or, after proteolytic processing, as a dimer of two chains linked by disulfide bond(s). Fe cation serves as cofactor. Characteristic constituent of osteoclasts.

Its subcellular location is the lysosome. It carries out the reaction a phosphate monoester + H2O = an alcohol + phosphate. May play a role in the process of bone resorption. The osteoclastic trap acts on nucleotide tri- and diphosphates with higher affinity, compared with other substrates. This is Tartrate-resistant acid phosphatase type 5 (Acp5) from Mus musculus (Mouse).